The sequence spans 356 residues: Phosphate acyltransferase (356 aa).

This sequence belongs to the PlsX family. As to quaternary structure, homodimer. Probably interacts with PlsY.

It localises to the cytoplasm. The enzyme catalyses a fatty acyl-[ACP] + phosphate = an acyl phosphate + holo-[ACP]. Its pathway is lipid metabolism; phospholipid metabolism. Functionally, catalyzes the reversible formation of acyl-phosphate (acyl-PO(4)) from acyl-[acyl-carrier-protein] (acyl-ACP). This enzyme utilizes acyl-ACP as fatty acyl donor, but not acyl-CoA. The chain is Phosphate acyltransferase from Shigella flexneri serotype 5b (strain 8401).